A 717-amino-acid polypeptide reads, in one-letter code: Polyribonucleotide nucleotidyltransferase (717 aa).

Aspartate 486 and aspartate 492 together coordinate Mg(2+). The KH domain occupies 553–612; the sequence is PKIVQLQIDIDKISLVIGSTGKTVKAITDEFEVRVQIEQDGRITLFGTDNLKMQKAKAKI. The S1 motif domain maps to 622 to 715; it reads GEIYDGIVKK…KFGKIELELA (94 aa). The disordered stretch occupies residues 650-681; the sequence is SNRSRSRDDRYGSDIRHSRYSNRNSRYGRDNR. Over residues 654-666 the composition is skewed to basic and acidic residues; the sequence is RSRDDRYGSDIRH.

This sequence belongs to the polyribonucleotide nucleotidyltransferase family. The cofactor is Mg(2+).

The protein resides in the cytoplasm. The catalysed reaction is RNA(n+1) + phosphate = RNA(n) + a ribonucleoside 5'-diphosphate. Functionally, involved in mRNA degradation. Catalyzes the phosphorolysis of single-stranded polyribonucleotides processively in the 3'- to 5'-direction. The polypeptide is Polyribonucleotide nucleotidyltransferase (Borrelia duttonii (strain Ly)).